Here is an 81-residue protein sequence, read N- to C-terminus: Sulfur carrier protein TusA (81 aa).

Residue cysteine 19 is the Cysteine persulfide intermediate of the active site.

Belongs to the sulfur carrier protein TusA family.

It localises to the cytoplasm. Its function is as follows. Sulfur carrier protein which probably makes part of a sulfur-relay system. The chain is Sulfur carrier protein TusA from Vibrio vulnificus (strain CMCP6).